Consider the following 417-residue polypeptide: UDP-N-acetylglucosamine 1-carboxyvinyltransferase (417 aa).

Residue 22–23 (KN) participates in phosphoenolpyruvate binding. Residue arginine 92 coordinates UDP-N-acetyl-alpha-D-glucosamine. Cysteine 116 functions as the Proton donor in the catalytic mechanism. Cysteine 116 carries the 2-(S-cysteinyl)pyruvic acid O-phosphothioketal modification. UDP-N-acetyl-alpha-D-glucosamine is bound by residues aspartate 304 and isoleucine 326.

The protein belongs to the EPSP synthase family. MurA subfamily.

It localises to the cytoplasm. The catalysed reaction is phosphoenolpyruvate + UDP-N-acetyl-alpha-D-glucosamine = UDP-N-acetyl-3-O-(1-carboxyvinyl)-alpha-D-glucosamine + phosphate. Its pathway is cell wall biogenesis; peptidoglycan biosynthesis. In terms of biological role, cell wall formation. Adds enolpyruvyl to UDP-N-acetylglucosamine. This Geobacter metallireducens (strain ATCC 53774 / DSM 7210 / GS-15) protein is UDP-N-acetylglucosamine 1-carboxyvinyltransferase.